We begin with the raw amino-acid sequence, 152 residues long: Large ribosomal subunit protein uL24 (152 aa).

The segment at valine 128 to lysine 152 is disordered.

This sequence belongs to the universal ribosomal protein uL24 family. In terms of assembly, part of the 50S ribosomal subunit.

One of two assembly initiator proteins, it binds directly to the 5'-end of the 23S rRNA, where it nucleates assembly of the 50S subunit. Functionally, located at the polypeptide exit tunnel on the outside of the subunit. In Staphylothermus marinus (strain ATCC 43588 / DSM 3639 / JCM 9404 / F1), this protein is Large ribosomal subunit protein uL24.